Reading from the N-terminus, the 273-residue chain is Gap junction beta-5 protein (273 aa).

Residues 1-20 are Cytoplasmic-facing; that stretch reads MNWSIFEGLLSGVNKYSTAF. Residues 21 to 40 form a helical membrane-spanning segment; the sequence is GRIWLSLVFIFRVLVYLVTA. The Extracellular portion of the chain corresponds to 41–75; sequence ERVWSDDHKDFDCNTRQPGCSNVCFDEFFPVSHVR. The helical transmembrane segment at 76–98 threads the bilayer; it reads LWALQLILVTCPSLLVVMHVAYR. Over 99–126 the chain is Cytoplasmic; the sequence is EVQEKRHREAHGENSGRLYLNPGKKRGG. Residues 127–149 form a helical membrane-spanning segment; the sequence is LWWTYVCSLVFKASVDIAFLYVF. At 150-187 the chain is on the extracellular side; the sequence is HSFYPKYILPPVVKCHADPCPNIVDCFISKPSEKNIFT. A helical membrane pass occupies residues 188-210; that stretch reads LFMVATAAICILLNLVELIYLVS. Over 211–273 the chain is Cytoplasmic; sequence KRCHECLAAR…PRDHVKKTIL (63 aa).

The protein belongs to the connexin family. Beta-type (group I) subfamily. In terms of assembly, a connexon is composed of a hexamer of connexins.

It is found in the cell membrane. It localises to the cell junction. Its subcellular location is the gap junction. Its function is as follows. One gap junction consists of a cluster of closely packed pairs of transmembrane channels, the connexons, through which materials of low MW diffuse from one cell to a neighboring cell. This Homo sapiens (Human) protein is Gap junction beta-5 protein (GJB5).